The following is a 509-amino-acid chain: ATP synthase subunit alpha (509 aa).

169-176 (GDRQTGKT) is an ATP binding site.

Belongs to the ATPase alpha/beta chains family. In terms of assembly, F-type ATPases have 2 components, CF(1) - the catalytic core - and CF(0) - the membrane proton channel. CF(1) has five subunits: alpha(3), beta(3), gamma(1), delta(1), epsilon(1). CF(0) has three main subunits: a(1), b(2) and c(9-12). The alpha and beta chains form an alternating ring which encloses part of the gamma chain. CF(1) is attached to CF(0) by a central stalk formed by the gamma and epsilon chains, while a peripheral stalk is formed by the delta and b chains.

The protein resides in the cell inner membrane. The catalysed reaction is ATP + H2O + 4 H(+)(in) = ADP + phosphate + 5 H(+)(out). Functionally, produces ATP from ADP in the presence of a proton gradient across the membrane. The alpha chain is a regulatory subunit. This Brucella ovis (strain ATCC 25840 / 63/290 / NCTC 10512) protein is ATP synthase subunit alpha.